The chain runs to 228 residues: uncharacterized protein (228 aa).

6 consecutive transmembrane segments (helical) span residues 14–34 (GWYI…MWLI), 53–73 (FLII…VLIV), 108–128 (GLTF…FFWL), 148–168 (AVKM…PIFF), 178–198 (TIIS…GFSI), and 200–220 (SVVY…YMAI).

It is found in the cell membrane. This is an uncharacterized protein from Bacillus subtilis (strain 168).